The primary structure comprises 135 residues: Small ribosomal subunit protein bS6 (135 aa).

Positions 98–135 (EASPMAKAKDERDARRAAISERSSEADEVEENAEESAE) are disordered. The segment covering 104 to 122 (KAKDERDARRAAISERSSE) has biased composition (basic and acidic residues). Residues 123-135 (ADEVEENAEESAE) are compositionally biased toward acidic residues.

The protein belongs to the bacterial ribosomal protein bS6 family.

Binds together with bS18 to 16S ribosomal RNA. This Shewanella amazonensis (strain ATCC BAA-1098 / SB2B) protein is Small ribosomal subunit protein bS6.